Reading from the N-terminus, the 165-residue chain is Chorismate pyruvate-lyase (165 aa).

Positions 35, 77, 115, and 156 each coordinate substrate.

This sequence belongs to the UbiC family. Monomer.

It localises to the cytoplasm. It carries out the reaction chorismate = 4-hydroxybenzoate + pyruvate. It functions in the pathway cofactor biosynthesis; ubiquinone biosynthesis. Removes the pyruvyl group from chorismate, with concomitant aromatization of the ring, to provide 4-hydroxybenzoate (4HB) for the ubiquinone pathway. This is Chorismate pyruvate-lyase from Salmonella arizonae (strain ATCC BAA-731 / CDC346-86 / RSK2980).